The sequence spans 227 residues: GTPase ERas (227 aa).

Over residues 1–19 (MALPTKSSILDLSSGTPCT) the composition is skewed to polar residues. Residues 1-25 (MALPTKSSILDLSSGTPCTRSPEES) are disordered. Residue 48 to 55 (GASGVGKS) participates in GTP binding. Positions 70–78 (HDPTIQDSY) match the Effector region motif. GTP is bound by residues 95–99 (DTSGQ) and 151–154 (NKCD). Residues Cys-220 and Cys-222 are each lipidated (S-palmitoyl cysteine). Cys-224 is subject to Cysteine methyl ester. Cys-224 carries S-farnesyl cysteine lipidation. The propeptide at 225 to 227 (SVA) is removed in mature form.

It belongs to the small GTPase superfamily. Ras family. Interacts with PIK3CD. In terms of tissue distribution, expressed in several undifferentiated mouse embryonic stem cell lines.

The protein resides in the cell membrane. The catalysed reaction is GTP + H2O = GDP + phosphate + H(+). Its activity is regulated as follows. Alternates between an inactive form bound to GDP and an active form bound to GTP. Activated by a guanine nucleotide-exchange factor (GEF) and inactivated by a GTPase-activating protein (GAP). In terms of biological role, ras proteins bind GDP/GTP and possess intrinsic GTPase activity. Plays an important role in the tumor-like growth properties of embryonic stem cells. The protein is GTPase ERas (Eras) of Mus musculus (Mouse).